Reading from the N-terminus, the 190-residue chain is dCTP deaminase, dUMP-forming (190 aa).

DCTP is bound by residues 101-106 (KSSLGR), aspartate 119, 127-129 (TLE), glutamine 148, tyrosine 162, and glutamine 174. Glutamate 129 serves as the catalytic Proton donor/acceptor. A disordered region spans residues 162 to 190 (YGSASAGSKYQGQRGPTPSRSYENFIKNT). Residues 166–190 (SAGSKYQGQRGPTPSRSYENFIKNT) show a composition bias toward polar residues.

This sequence belongs to the dCTP deaminase family. As to quaternary structure, homotrimer.

The catalysed reaction is dCTP + 2 H2O = dUMP + NH4(+) + diphosphate. It functions in the pathway pyrimidine metabolism; dUMP biosynthesis; dUMP from dCTP: step 1/1. Its function is as follows. Bifunctional enzyme that catalyzes both the deamination of dCTP to dUTP and the hydrolysis of dUTP to dUMP without releasing the toxic dUTP intermediate. This Mycobacterium leprae (strain Br4923) protein is dCTP deaminase, dUMP-forming.